Consider the following 837-residue polypeptide: Histone acetyltransferase KAT2A (837 aa).

The segment at 1–99 (MAEPSQAPTP…RKAQVRGLPR (99 aa)) is disordered. At alanine 2 the chain carries N-acetylalanine. Positions 7 to 51 (APTPAPAAQPRPLQSPAPAPTPTPAPSPASAPIPTPTPAPAPAPA) are enriched in pro residues. A compositionally biased stretch (gly residues) spans 58 to 74 (TGTGGPGVGSGGAGSGG). The span at 75–87 (DPARPGLSQQQRA) shows a compositional bias: low complexity. A compositionally biased stretch (basic residues) spans 88-99 (SQRKAQVRGLPR). Residue serine 307 is modified to Phosphoserine. A disordered region spans residues 407–434 (FSPSMGGGSNSSLSLDSAGAEPMPGEKR). Residues 416–425 (NSSLSLDSAG) show a composition bias toward low complexity. One can recognise an N-acetyltransferase domain in the interval 503–656 (VIGNSLTPKA…GATLMECELN (154 aa)). N6-acetyllysine is present on lysine 549. The active-site Proton donor/acceptor is the glutamate 575. Residues 579-581 (CAV), 586-592 (QVKGYGT), and tyrosine 617 each bind acetyl-CoA. Succinyl-CoA-binding positions include 579–581 (CAV), 586–592 (QVKGYGT), and tyrosine 617. Residues 639 to 648 (LGYIKDYEGA) are loop 3. Lysine 728 participates in a covalent cross-link: Glycyl lysine isopeptide (Lys-Gly) (interchain with G-Cter in SUMO2). Positions 728–832 (KDPDQLYTTL…KFFYFKLKEG (105 aa)) constitute a Bromo domain. Position 735 is a phosphothreonine (threonine 735). Glycyl lysine isopeptide (Lys-Gly) (interchain with G-Cter in SUMO2) cross-links involve residues lysine 759 and lysine 791.

This sequence belongs to the acetyltransferase family. GCN5 subfamily. As to quaternary structure, homooligomer; may form a tetramer of homodimers. Interacts with EP300, CREBBP and ADA2. Component of the TFTC-HAT complex, at least composed of TAF5L, TAF6L, TAF3, TADA3L, SUPT3H/SPT3, TAF2/TAFII150, TAF4/TAFII135, TAF5/TAFII100, KAT2A/GCN5L2, TAF10 and TRRAP. Component of the STAGA transcription coactivator-HAT complex, at least composed of SUPT3H, KAT2A, SUPT7L, TAF5L, TAF6L, TADA3L, TAD1L, TAF10, TAF12, TRRAP and TAF9. The STAGA core complex is associated with a subcomplex required for histone deubiquitination composed of ATXN7L3, ENY2 and USP22. Component of the ADA2A-containing complex (ATAC), composed of KAT14, KAT2A, TADA2L, TADA3L, ZZ3, MBIP, WDR5, YEATS2, CCDC101 and DR1. In the complex, it probably interacts directly with KAT14, MBIP and WDR5. Interacts with PML. Interacts with CEBPB. Interacts with TACC1, TACC2 and TACC3. Interacts with RELA. Interacts with NFATC2. Interacts with TBX5. Interacts with PLK4. Associates with the 2-oxoglutarate dehydrogenase complex. Interacts with XPC; leading to KAT2A recruitment to promoters and subsequent acetylation of histones. Interacts with ERCC3/XPB; leading to KAT2A recruitment to promoters and subsequent acetylation of histones. Interacts with ISL1. Interactions of ISL1 with MLIP1 or KAT2A may be mutually exclusive. In terms of assembly, (Microbial infection) Interacts with and acetylates HIV-1 Tat. Acetylated at Lys-549, inhibiting the protein acetyltransferase activity. Deacetylation at Lys-549 by SIRT6 promotes phosphorylation at Ser-307 and Thr-735 and subsequent activation of the protein acetyltransferase activity, leading to acetylation and inactivation of PPARGC1A. Expressed in all tissues tested.

It is found in the nucleus. The protein resides in the chromosome. The protein localises to the cytoplasm. Its subcellular location is the cytoskeleton. It localises to the microtubule organizing center. It is found in the centrosome. It catalyses the reaction L-lysyl-[histone] + acetyl-CoA = N(6)-acetyl-L-lysyl-[histone] + CoA + H(+). It carries out the reaction L-lysyl-[protein] + acetyl-CoA = N(6)-acetyl-L-lysyl-[protein] + CoA + H(+). The catalysed reaction is succinyl-CoA + L-lysyl-[protein] = N(6)-succinyl-L-lysyl-[protein] + CoA + H(+). The enzyme catalyses glutaryl-CoA + L-lysyl-[protein] = N(6)-glutaryl-L-lysyl-[protein] + CoA + H(+). Its function is as follows. Protein lysine acyltransferase that can act as a acetyltransferase, glutaryltransferase, succinyltransferase or malonyltransferase, depending on the context. Acts as a histone lysine succinyltransferase: catalyzes succinylation of histone H3 on 'Lys-79' (H3K79succ), with a maximum frequency around the transcription start sites of genes. Succinylation of histones gives a specific tag for epigenetic transcription activation. Association with the 2-oxoglutarate dehydrogenase complex, which provides succinyl-CoA, is required for histone succinylation. In different complexes, functions either as an acetyltransferase (HAT) or as a succinyltransferase: in the SAGA and ATAC complexes, acts as a histone acetyltransferase. Has significant histone acetyltransferase activity with core histones, but not with nucleosome core particles. Has a a strong preference for acetylation of H3 at 'Lys-9' (H3K9ac). Acetylation of histones gives a specific tag for epigenetic transcription activation. Recruited by the XPC complex at promoters, where it specifically mediates acetylation of histone variant H2A.Z.1/H2A.Z, thereby promoting expression of target genes. Involved in long-term memory consolidation and synaptic plasticity: acts by promoting expression of a hippocampal gene expression network linked to neuroactive receptor signaling. Acts as a positive regulator of T-cell activation: upon TCR stimulation, recruited to the IL2 promoter following interaction with NFATC2 and catalyzes acetylation of histone H3 at 'Lys-9' (H3K9ac), leading to promote IL2 expression. Required for growth and differentiation of craniofacial cartilage and bone by regulating acetylation of histone H3 at 'Lys-9' (H3K9ac). Regulates embryonic stem cell (ESC) pluripotency and differentiation. Also acetylates non-histone proteins, such as CEBPB, MRE11, PPARGC1A, PLK4 and TBX5. Involved in heart and limb development by mediating acetylation of TBX5, acetylation regulating nucleocytoplasmic shuttling of TBX5. Acts as a negative regulator of centrosome amplification by mediating acetylation of PLK4. Acts as a negative regulator of gluconeogenesis by mediating acetylation and subsequent inactivation of PPARGC1A. Also acts as a histone glutaryltransferase: catalyzes glutarylation of histone H4 on 'Lys-91' (H4K91glu), a mark that destabilizes nucleosomes by promoting dissociation of the H2A-H2B dimers from nucleosomes. In terms of biological role, (Microbial infection) In case of HIV-1 infection, it is recruited by the viral protein Tat. Regulates Tat's transactivating activity and may help inducing chromatin remodeling of proviral genes. The chain is Histone acetyltransferase KAT2A from Homo sapiens (Human).